The following is a 301-amino-acid chain: METLQNVVTGGKKGGCTSGSRPLRILLVGKSGCGKSATGNSLLRRPAFESRLRGQSVTRTSQAETGTWEGRSILVVDTPPIFESKAQNQDMDKDIGDCYLLCAPGPHVLLLVTQLGRFTAEDVMAVRMVKEVFGVGVMRHMIVLFTRKEDLAEKSLEEFVTHTDNRSLRSLVQECGRRYCAFNNRASGEEQQGQLAELMALVRRLEQECEGSFHSNDLFLHAETLLREGYSVHQEAYRCYLAKVRQEVEKQRWELEEQEGSWVLKVLPIGKKLEVLHSDFCWYLVLAILIFFVFFFLLFYV.

The Cytoplasmic portion of the chain corresponds to 1-279; sequence METLQNVVTG…GKKLEVLHSD (279 aa). The 204-residue stretch at 20 to 223 folds into the AIG1-type G domain; that stretch reads SRPLRILLVG…HSNDLFLHAE (204 aa). GTP contacts are provided by residues 29–37, Ser50, 147–149, and Asn184; these read GKSGCGKSA and RKE. Residues 263-301 form a required for targeting to the endoplasmic reticulum region; the sequence is VLKVLPIGKKLEVLHSDFCWYLVLAILIFFVFFFLLFYV. Residues 280–300 traverse the membrane as a helical; Anchor for type IV membrane protein segment; that stretch reads FCWYLVLAILIFFVFFFLLFY. Position 301 (Val301) is a topological domain, lumenal.

It belongs to the TRAFAC class TrmE-Era-EngA-EngB-Septin-like GTPase superfamily. AIG1/Toc34/Toc159-like paraseptin GTPase family. IAN subfamily. In terms of assembly, interacts with BAD, BAK1, BAX, BCL2, BCL2L1/Bcl-xL and BCL2L11/BimEL. The interaction with BAX is increased, when cells initiate apoptosis upon IL2 withdrawal. In terms of tissue distribution, expressed in thymus (in thymocytes), spleen (in splenocytes), lymph node and, at lower levels, in lung. Highly expressed in T lymphocytes.

It localises to the endoplasmic reticulum membrane. Functionally, during thymocyte development, may support the positive selection of CD4 and CD8 T cells. May play a role in mitochondrial DNA segregation in hematopoietic tissues. Binds GTP. In Mus musculus (Mouse), this protein is GTPase IMAP family member 3 (Gimap3).